Consider the following 152-residue polypeptide: Deoxyuridine 5'-triphosphate nucleotidohydrolase (152 aa).

Residues 71 to 73 (RSG), asparagine 84, 88 to 90 (LID), and methionine 98 each bind substrate.

It belongs to the dUTPase family. The cofactor is Mg(2+).

It carries out the reaction dUTP + H2O = dUMP + diphosphate + H(+). It participates in pyrimidine metabolism; dUMP biosynthesis; dUMP from dCTP (dUTP route): step 2/2. In terms of biological role, this enzyme is involved in nucleotide metabolism: it produces dUMP, the immediate precursor of thymidine nucleotides and it decreases the intracellular concentration of dUTP so that uracil cannot be incorporated into DNA. This Coxiella burnetii (strain Dugway 5J108-111) protein is Deoxyuridine 5'-triphosphate nucleotidohydrolase.